We begin with the raw amino-acid sequence, 355 residues long: Epoxyqueuosine reductase (355 aa).

Aspartate 143 serves as the catalytic Proton donor. Positions 185–217 (LPLPIDTPATAHCGTCTRCIDICPTQAIIAPHR) constitute a 4Fe-4S ferredoxin-type domain. Residues cysteine 197, cysteine 200, cysteine 203, cysteine 207, cysteine 223, cysteine 250, cysteine 253, and cysteine 257 each coordinate [4Fe-4S] cluster.

It belongs to the QueG family. In terms of assembly, monomer. The cofactor is cob(II)alamin. Requires [4Fe-4S] cluster as cofactor.

It localises to the cytoplasm. The catalysed reaction is epoxyqueuosine(34) in tRNA + AH2 = queuosine(34) in tRNA + A + H2O. It functions in the pathway tRNA modification; tRNA-queuosine biosynthesis. Catalyzes the conversion of epoxyqueuosine (oQ) to queuosine (Q), which is a hypermodified base found in the wobble positions of tRNA(Asp), tRNA(Asn), tRNA(His) and tRNA(Tyr). The sequence is that of Epoxyqueuosine reductase from Xanthomonas campestris pv. campestris (strain ATCC 33913 / DSM 3586 / NCPPB 528 / LMG 568 / P 25).